A 410-amino-acid polypeptide reads, in one-letter code: Elongation factor Tu (410 aa).

A tr-type G domain is found at 10–214 (KPHVNIGTIG…EVDAYIPTPE (205 aa)). Residues 19–26 (GHVDHGKT) are G1. GTP is bound at residue 19 to 26 (GHVDHGKT). Thr26 lines the Mg(2+) pocket. The segment at 60–64 (GITIN) is G2. The G3 stretch occupies residues 81–84 (DCPG). Residues 81-85 (DCPGH) and 136-139 (NKAD) each bind GTP. The tract at residues 136–139 (NKAD) is G4. Residues 174-176 (SAL) are G5.

This sequence belongs to the TRAFAC class translation factor GTPase superfamily. Classic translation factor GTPase family. EF-Tu/EF-1A subfamily. In terms of assembly, monomer.

It localises to the cytoplasm. It catalyses the reaction GTP + H2O = GDP + phosphate + H(+). Its function is as follows. GTP hydrolase that promotes the GTP-dependent binding of aminoacyl-tRNA to the A-site of ribosomes during protein biosynthesis. This is Elongation factor Tu from Arthrospira platensis (Spirulina platensis).